A 67-amino-acid chain; its full sequence is MNKRYKLYRVWYYYAHQTVCITSTGFALCFVVQAKTAGLGVTPITSLYGDKKEHLGKLLVPLVLYQI.

A helical transmembrane segment spans residues 12–34; it reads YYYAHQTVCITSTGFALCFVVQA.

The protein localises to the membrane. This is an uncharacterized protein from Saccharomyces cerevisiae (strain ATCC 204508 / S288c) (Baker's yeast).